A 606-amino-acid chain; its full sequence is WD repeat-containing protein 1 (606 aa).

WD repeat units lie at residues 4-45 (EIKK…LRNI), 48-87 (PAIA…IWDT), 93-135 (LLKY…LWDS), 138-176 (SVGE…FFEG), 180-218 (KFKF…IYDG), 224-263 (VCAL…IWDV), 270-306 (NTFT…YLDK), 311-351 (KPLR…YWDS), 358-408 (SFAG…KLDV), 432-474 (LKDQ…LYSI), 480-518 (KDEG…VFSV), 523-561 (SENN…VWTL), and 566-604 (TRVK…EWTI). Lysine 28, lysine 81, lysine 95, and lysine 115 each carry N6-acetyllysine. Tyrosine 238 carries the phosphotyrosine modification. Residue lysine 480 is modified to N6-acetyllysine.

Belongs to the WD repeat AIP1 family.

It localises to the cytoplasm. Its subcellular location is the cytoskeleton. The protein resides in the cell projection. The protein localises to the podosome. Induces disassembly of actin filaments in conjunction with ADF/cofilin family proteins. Enhances cofilin-mediated actin severing. Involved in cytokinesis. Involved in chemotactic cell migration by restricting lamellipodial membrane protrusions. Involved in myocardium sarcomere organization. Required for cardiomyocyte growth and maintenance. Involved in megakaryocyte maturation and platelet shedding. Required for the establishment of planar cell polarity (PCP) during follicular epithelium development and for cell shape changes during PCP; the function seems to implicate cooperation with CFL1 and/or DSTN/ADF. Involved in the generation/maintenance of cortical tension. Involved in assembly and maintenance of epithelial apical cell junctions and plays a role in the organization of the perijunctional actomyosin belt. This Bos taurus (Bovine) protein is WD repeat-containing protein 1 (WDR1).